A 1171-amino-acid chain; its full sequence is Protein WWC2 (1171 aa).

2 WW domains span residues 9 to 42 (LPLP…DPRD) and 56 to 89 (NELP…DPRK). Coiled coils occupy residues 120 to 193 (KEQR…YKEQ), 223 to 257 (ELKS…LEEA), and 301 to 420 (LAEK…KSAT). 2 disordered regions span residues 521 to 552 (SPTA…LSPP) and 603 to 637 (QALA…KNPD). Low complexity predominate over residues 534–551 (PKSVTSLSSLSSLSSLSP). 2 stretches are compositionally biased toward basic and acidic residues: residues 606–616 (AERKSTGEGLR) and 625–637 (GRTD…KNPD). Residues 684-806 (GAAQAQLILR…FSNDVHTQWY (123 aa)) form the C2 domain. 2 coiled-coil regions span residues 836-870 (LDLD…EQLC) and 1047-1123 (DLEL…NAEK).

The protein belongs to the WWC family.

It is found in the cytoplasm. The protein resides in the cytosol. In terms of biological role, negative regulator of the Hippo signaling pathway, also known as the Salvador-Warts-Hippo (SWH) pathway. This chain is Protein WWC2 (wwc2), found in Xenopus tropicalis (Western clawed frog).